The sequence spans 95 residues: Co-chaperonin GroES (95 aa).

Belongs to the GroES chaperonin family. In terms of assembly, heptamer of 7 subunits arranged in a ring. Interacts with the chaperonin GroEL.

The protein localises to the cytoplasm. In terms of biological role, together with the chaperonin GroEL, plays an essential role in assisting protein folding. The GroEL-GroES system forms a nano-cage that allows encapsulation of the non-native substrate proteins and provides a physical environment optimized to promote and accelerate protein folding. GroES binds to the apical surface of the GroEL ring, thereby capping the opening of the GroEL channel. This is Co-chaperonin GroES from Streptococcus salivarius.